The sequence spans 282 residues: Ribosomal RNA small subunit methyltransferase A (282 aa).

Asparagine 28, leucine 30, glycine 55, glutamate 77, aspartate 103, and asparagine 123 together coordinate S-adenosyl-L-methionine.

Belongs to the class I-like SAM-binding methyltransferase superfamily. rRNA adenine N(6)-methyltransferase family. RsmA subfamily.

The protein resides in the cytoplasm. It carries out the reaction adenosine(1518)/adenosine(1519) in 16S rRNA + 4 S-adenosyl-L-methionine = N(6)-dimethyladenosine(1518)/N(6)-dimethyladenosine(1519) in 16S rRNA + 4 S-adenosyl-L-homocysteine + 4 H(+). In terms of biological role, specifically dimethylates two adjacent adenosines (A1518 and A1519) in the loop of a conserved hairpin near the 3'-end of 16S rRNA in the 30S particle. May play a critical role in biogenesis of 30S subunits. The sequence is that of Ribosomal RNA small subunit methyltransferase A from Afipia carboxidovorans (strain ATCC 49405 / DSM 1227 / KCTC 32145 / OM5) (Oligotropha carboxidovorans).